The following is a 318-amino-acid chain: GTP 3',8-cyclase (318 aa).

The Radical SAM core domain occupies 5-217; sequence KFERKIDYIR…DKIAKKYKFK (213 aa). A GTP-binding site is contributed by R14. [4Fe-4S] cluster contacts are provided by C21 and C25. An S-adenosyl-L-methionine-binding site is contributed by Y27. [4Fe-4S] cluster is bound at residue C28. Residue R64 participates in GTP binding. G68 serves as a coordination point for S-adenosyl-L-methionine. Position 95 (T95) interacts with GTP. S119 provides a ligand contact to S-adenosyl-L-methionine. Residue K155 coordinates GTP. M189 contributes to the S-adenosyl-L-methionine binding site. The [4Fe-4S] cluster site is built by C248 and C251. 253–255 lines the GTP pocket; the sequence is RIR. [4Fe-4S] cluster is bound at residue C265.

It belongs to the radical SAM superfamily. MoaA family. In terms of assembly, monomer and homodimer. The cofactor is [4Fe-4S] cluster.

It carries out the reaction GTP + AH2 + S-adenosyl-L-methionine = (8S)-3',8-cyclo-7,8-dihydroguanosine 5'-triphosphate + 5'-deoxyadenosine + L-methionine + A + H(+). Its pathway is cofactor biosynthesis; molybdopterin biosynthesis. Catalyzes the cyclization of GTP to (8S)-3',8-cyclo-7,8-dihydroguanosine 5'-triphosphate. In Nautilia profundicola (strain ATCC BAA-1463 / DSM 18972 / AmH), this protein is GTP 3',8-cyclase.